Consider the following 132-residue polypeptide: Small ribosomal subunit protein eS12 (132 aa).

N-acetylalanine is present on Ala2. At Lys129 the chain carries N6-succinyllysine.

The protein belongs to the eukaryotic ribosomal protein eS12 family. As to quaternary structure, part of the small subunit (SSU) processome, composed of more than 70 proteins and the RNA chaperone small nucleolar RNA (snoRNA) U3. Subunit of the 40S ribosomal complex.

The protein localises to the nucleus. Its subcellular location is the nucleolus. In terms of biological role, part of the small subunit (SSU) processome, first precursor of the small eukaryotic ribosomal subunit. During the assembly of the SSU processome in the nucleolus, many ribosome biogenesis factors, an RNA chaperone and ribosomal proteins associate with the nascent pre-rRNA and work in concert to generate RNA folding, modifications, rearrangements and cleavage as well as targeted degradation of pre-ribosomal RNA by the RNA exosome. Subunit of the 40S ribosomal complex. The chain is Small ribosomal subunit protein eS12 (Rps12) from Rattus norvegicus (Rat).